The following is a 22-amino-acid chain: Zinc metalloproteinase oxiagin (22 aa).

Residues 14–22 (CYIEFYVVV) enclose the Peptidase M12B domain.

It belongs to the venom metalloproteinase (M12B) family. P-III subfamily. P-IIId sub-subfamily. Heterotrimer; disulfide-linked. The heterotrimer consists of 1 metalloproteinase chain and 2 lectin chains. The cofactor is Zn(2+). N-glycosylated. In terms of tissue distribution, expressed by the venom gland.

Its subcellular location is the secreted. Snake venom metalloproteinase that inhibits the classical complement pathway dose-dependently. It acts by binding to carbohydrates of IgG within the antibody-sensitized sheep erythrocytes (EA) complex, and thus prevents interaction of component C2 with immobilized C4b. Also induces cation-independent hemagglutination that can be prevented by D-galactose pretreatment. The sequence is that of Zinc metalloproteinase oxiagin from Naja oxiana (Central Asian cobra).